A 601-amino-acid chain; its full sequence is HMG domain-containing protein 4 (601 aa).

Lys8 participates in a covalent cross-link: Glycyl lysine isopeptide (Lys-Gly) (interchain with G-Cter in SUMO2). Disordered stretches follow at residues 51-410 (VRNS…KKKN) and 473-514 (TTVK…ASPA). Over residues 82–93 (DYYYGDISSLES) the composition is skewed to low complexity. A Phosphoserine modification is found at Ser102. A Glycyl lysine isopeptide (Lys-Gly) (interchain with G-Cter in SUMO2) cross-link involves residue Lys191. Ser197 is modified (phosphoserine). 2 stretches are compositionally biased toward polar residues: residues 212–221 (QYPSQQATVK) and 270–282 (DASQ…SANL). The segment covering 316–344 (IKKKKKSKKSKKKKDKEKHKEKRHSKSKR) has biased composition (basic residues). Basic and acidic residues predominate over residues 394–404 (EEKDKERERGE). The HMG box DNA-binding region spans 407-475 (KKKNMSAYQV…KQNKAEATTV (69 aa)). A phosphoserine mark is found at Ser497, Ser502, and Ser512.

The protein localises to the nucleus. Negatively regulates Wnt/beta-catenin signaling during development. The chain is HMG domain-containing protein 4 (HMGXB4) from Homo sapiens (Human).